A 130-amino-acid polypeptide reads, in one-letter code: Large ribosomal subunit protein bL19c (130 aa).

Belongs to the bacterial ribosomal protein bL19 family.

It localises to the plastid. The protein localises to the chloroplast. In Chlorella vulgaris (Green alga), this protein is Large ribosomal subunit protein bL19c (rpl19).